The following is a 969-amino-acid chain: Leucine--tRNA ligase (969 aa).

The segment at 1–23 (MTESPTTSPATGSGAAAPDSDAP) is disordered. The 'HIGH' region signature appears at 78–89 (PYPSGEGLHVGH). The 'KMSKS' region motif lies at 737-741 (KIGKS). ATP is bound at residue K740.

The protein belongs to the class-I aminoacyl-tRNA synthetase family.

It localises to the cytoplasm. The catalysed reaction is tRNA(Leu) + L-leucine + ATP = L-leucyl-tRNA(Leu) + AMP + diphosphate. This Mycobacterium avium (strain 104) protein is Leucine--tRNA ligase.